Here is a 125-residue protein sequence, read N- to C-terminus: Glycine cleavage system H protein (125 aa).

The Lipoyl-binding domain maps to 22–103 (VFVVGITENA…AFTAWIFKIK (82 aa)). Position 63 is an N6-lipoyllysine (Lys63).

Belongs to the GcvH family. The glycine cleavage system is composed of four proteins: P, T, L and H. (R)-lipoate serves as cofactor.

The glycine cleavage system catalyzes the degradation of glycine. The H protein shuttles the methylamine group of glycine from the P protein to the T protein. This is Glycine cleavage system H protein from Bordetella avium (strain 197N).